Consider the following 753-residue polypeptide: Inactive protein-tyrosine phosphatase egg-4 (753 aa).

Disordered stretches follow at residues 26-46 (TSLQSFCSGNTDDSSADSTDN) and 75-145 (SFRK…SGHG). Positions 35 to 46 (NTDDSSADSTDN) are enriched in low complexity. 2 stretches are compositionally biased toward basic and acidic residues: residues 84-94 (AQKDRRSKERL) and 129-145 (VSEKPKDEGRREDSGHG). The Tyrosine-protein phosphatase domain occupies 408-661 (MERRFEILEN…IFVHRLVAFF (254 aa)).

It belongs to the protein-tyrosine phosphatase family. Part of a complex, consisting of pseudophosphatases egg-3, egg-4, egg-5 and kinase mbk-2; this complex is required for the oocyte-to-zygote transition. Interacts (via tyrosine-protein phosphatase domain) with kinase mbk-2 (via 'Tyr-619' and 'Tyr-621'); mbk-2 tyrosine phosphorylation enhances the interaction. The interaction inhibits mbk-2 kinase activity and is required for mbk-2 oocyte cortex localization. Interacts with egg-3.

It is found in the cytoplasm. It localises to the cell cortex. Its function is as follows. Inactive phosphatase which acts redundantly with egg-5 in the oocyte-to-zygote transition. Required for the polarization of cortical actin cytoskeleton rearrangement in the oocyte before and after fertilization. Together with egg-5, required for the cortical localization of kinase mbk-2 and for the inhibition of mbk-2 kinase activity in maturing oocyte until the end of meiosis I. Also required for kinase mbk-2, pseudophosphatase egg-3 and chitin synthase chs-1 localization to cytoplasmic foci after fertilization. The polypeptide is Inactive protein-tyrosine phosphatase egg-4 (Caenorhabditis elegans).